Here is a 171-residue protein sequence, read N- to C-terminus: MEIILIKPVRKLGKIGDILKVADGFGRNYLLPQKLAIRATEPNKELIVKQKHEFEAKDKQIREEVEKINALIKDQQLVFIRQTSNDGKLFGSVTNKEVADKLSENISYNISHSNIILDKQIKSTGIYTVEIRLHAELNAIVTVIVARSESEAQDYLREQKTETSEDLAESA.

It belongs to the bacterial ribosomal protein bL9 family.

Its function is as follows. Binds to the 23S rRNA. This chain is Large ribosomal subunit protein bL9, found in Rickettsia africae (strain ESF-5).